A 238-amino-acid chain; its full sequence is 2-C-methyl-D-erythritol 4-phosphate cytidylyltransferase (238 aa).

This sequence belongs to the IspD/TarI cytidylyltransferase family. IspD subfamily.

The enzyme catalyses 2-C-methyl-D-erythritol 4-phosphate + CTP + H(+) = 4-CDP-2-C-methyl-D-erythritol + diphosphate. It functions in the pathway isoprenoid biosynthesis; isopentenyl diphosphate biosynthesis via DXP pathway; isopentenyl diphosphate from 1-deoxy-D-xylulose 5-phosphate: step 2/6. In terms of biological role, catalyzes the formation of 4-diphosphocytidyl-2-C-methyl-D-erythritol from CTP and 2-C-methyl-D-erythritol 4-phosphate (MEP). This is 2-C-methyl-D-erythritol 4-phosphate cytidylyltransferase from Aliivibrio fischeri (strain MJ11) (Vibrio fischeri).